Reading from the N-terminus, the 281-residue chain is Probable endonuclease 4 (281 aa).

Zn(2+)-binding residues include His-69, His-109, Glu-145, Asp-179, His-182, His-216, Asp-229, His-231, and Glu-261.

This sequence belongs to the AP endonuclease 2 family. The cofactor is Zn(2+).

The enzyme catalyses Endonucleolytic cleavage to 5'-phosphooligonucleotide end-products.. In terms of biological role, endonuclease IV plays a role in DNA repair. It cleaves phosphodiester bonds at apurinic or apyrimidinic (AP) sites, generating a 3'-hydroxyl group and a 5'-terminal sugar phosphate. The polypeptide is Probable endonuclease 4 (Pectobacterium carotovorum subsp. carotovorum (strain PC1)).